Consider the following 312-residue polypeptide: MKVAVLGAAGGIGQALALLLKNQLPSGSELSLYDIAPVTPGVAVDLSHIPTAVKIKGFSGEDATPALEGADVVLISAGVARKPGMDRSDLFNVNAGIVKNLVQQIAKTCPKACVGIITNPVNTTVAIAAEVLKKAGVYDKNKLFGVTTLDIIRSNTFVAELKGKLPTEVEVPVIGGHSGVTILPLLSQIPGVSFTEQEAAELTKRIQNAGTEVVEAKAGGGSATLSMGQAAARFGLSLVRALQGEKGVVECAYVEGDGQYARFFSQPLLLGKNGVEERKSIGTLSAFEQHSLDAMLDTLKKDIQLGEDFINK.

NAD(+) contacts are provided by residues 7-13 (GAAGGIG) and Asp34. Arg81 and Arg87 together coordinate substrate. NAD(+)-binding positions include Asn94 and 117-119 (ITN). Substrate contacts are provided by Asn119 and Arg153. His177 acts as the Proton acceptor in catalysis. Met227 contacts NAD(+).

This sequence belongs to the LDH/MDH superfamily. MDH type 1 family. Homodimer.

It carries out the reaction (S)-malate + NAD(+) = oxaloacetate + NADH + H(+). Its function is as follows. Catalyzes the reversible oxidation of malate to oxaloacetate. This chain is Malate dehydrogenase, found in Salmonella agona (strain SL483).